A 910-amino-acid polypeptide reads, in one-letter code: Dynein axonemal assembly factor 1 homolog (910 aa).

LRR repeat units follow at residues 43–64, 65–86, 87–108, 111–132, and 136–157; these read GLKC…DHQS, QLRC…QHCK, QLDT…GSDI, VLNT…AELR, and FVSV…KVLA. Residues 171 to 209 form the LRRCT domain; sequence PVVNDIPSYRKTLILECKSLTYLDSRPVFDKDRACAEAW. Residues 217–230 are compositionally biased toward basic and acidic residues; the sequence is ERKEHQRWKKEEQR. 6 disordered regions span residues 217–275, 297–332, 344–399, 620–642, 662–682, and 855–910; these read ERKE…GDFE, TKGD…DPTL, SRAC…GSIL, EQVP…PVDQ, QVEV…IPEE, and EELE…QGDH. Residues 314 to 331 are compositionally biased toward polar residues; the sequence is STNSVDYITGSDSNSDPT. The span at 380–389 shows a compositional bias: low complexity; sequence SLSDSSSSSS. Residues 620–633 show a composition bias toward basic and acidic residues; it reads EQVPDEVEANDKAS. Over residues 855 to 865 the composition is skewed to acidic residues; it reads EELEELNEEED. Basic and acidic residues predominate over residues 866-878; the sequence is PALKEAGDFKHDE.

It belongs to the DNAAF1 family.

The protein localises to the cell projection. It localises to the cilium. Cilium-specific protein required for cilia structures. The chain is Dynein axonemal assembly factor 1 homolog from Anopheles gambiae (African malaria mosquito).